The sequence spans 466 residues: Argininosuccinate lyase (466 aa).

This sequence belongs to the lyase 1 family. Argininosuccinate lyase subfamily.

The protein resides in the cytoplasm. The catalysed reaction is 2-(N(omega)-L-arginino)succinate = fumarate + L-arginine. It participates in amino-acid biosynthesis; L-arginine biosynthesis; L-arginine from L-ornithine and carbamoyl phosphate: step 3/3. This chain is Argininosuccinate lyase, found in Brucella abortus (strain S19).